The chain runs to 201 residues: Dynactin subunit 6 (201 aa).

The protein belongs to the dynactin subunits 5/6 family. Dynactin subunit 6 subfamily. Member of the pointed-end complex of the dynactin shoulder complex which contains dctn4, dctn5 and dctn6 subunits and Actr10. Within the complex dctn6 forms a heterodimer with dctn5. Interacts with plk1.

The protein localises to the cytoplasm. It localises to the cytoskeleton. Its subcellular location is the chromosome. It is found in the centromere. The protein resides in the kinetochore. In terms of biological role, part of the dynactin complex that activates the molecular motor dynein for ultra-processive transport along microtubules. This is Dynactin subunit 6 (dctn6) from Xenopus tropicalis (Western clawed frog).